Here is a 349-residue protein sequence, read N- to C-terminus: Signal peptidase I (349 aa).

The next 2 helical transmembrane spans lie at 3 to 23 (NLFFVILLAVGFGVWKVLDYF) and 25 to 45 (LPNTFSILLLILTALSGVLWC). Residues 46-80 (YHRFVVLPKRHRQVARAEQRSGKTLSEEEKAKIEP) are Cytoplasmic-facing. A helical transmembrane segment spans residues 81 to 101 (ISEASEFLSSLFPVLAVVFLV). The Periplasmic portion of the chain corresponds to 102–349 (RSFLFEPFQI…RFERFFTAIK (248 aa)). Active-site residues include Ser115 and Lys196.

This sequence belongs to the peptidase S26 family.

The protein localises to the cell inner membrane. It carries out the reaction Cleavage of hydrophobic, N-terminal signal or leader sequences from secreted and periplasmic proteins.. In Haemophilus influenzae (strain ATCC 51907 / DSM 11121 / KW20 / Rd), this protein is Signal peptidase I (lepB).